Consider the following 267-residue polypeptide: Hydroxyethylthiazole kinase (267 aa).

Met46 is a substrate binding site. Positions 121 and 167 each coordinate ATP. Ala194 contributes to the substrate binding site.

This sequence belongs to the Thz kinase family. Requires Mg(2+) as cofactor.

The enzyme catalyses 5-(2-hydroxyethyl)-4-methylthiazole + ATP = 4-methyl-5-(2-phosphooxyethyl)-thiazole + ADP + H(+). It functions in the pathway cofactor biosynthesis; thiamine diphosphate biosynthesis; 4-methyl-5-(2-phosphoethyl)-thiazole from 5-(2-hydroxyethyl)-4-methylthiazole: step 1/1. Catalyzes the phosphorylation of the hydroxyl group of 4-methyl-5-beta-hydroxyethylthiazole (THZ). The polypeptide is Hydroxyethylthiazole kinase (Rhizobium johnstonii (strain DSM 114642 / LMG 32736 / 3841) (Rhizobium leguminosarum bv. viciae)).